A 230-amino-acid chain; its full sequence is UPF0173 metal-dependent hydrolase MK1542 (230 aa).

The protein belongs to the UPF0173 family.

The sequence is that of UPF0173 metal-dependent hydrolase MK1542 from Methanopyrus kandleri (strain AV19 / DSM 6324 / JCM 9639 / NBRC 100938).